The sequence spans 337 residues: WAT1-related protein At1g11460 (337 aa).

10 helical membrane-spanning segments follow: residues 14-34 (WPPI…NALV), 46-66 (IIGA…AYIL), 83-103 (FISG…GLSY), 107-127 (TVAC…ALIL), 139-159 (AGMI…FLTF), 188-208 (WLLG…WILF), 220-240 (FSST…LSLY), 254-274 (FVIG…TVSV), 284-304 (VFVS…DFII), and 309-329 (LYLG…VFLW). An EamA 1 domain is found at 27–157 (MGSVNALVKK…IICISGALFL (131 aa)). Residues 220 to 328 (FSSTCLMSIF…GTITGLYVFL (109 aa)) enclose the EamA 2 domain.

The protein belongs to the drug/metabolite transporter (DMT) superfamily. Plant drug/metabolite exporter (P-DME) (TC 2.A.7.4) family.

Its subcellular location is the membrane. The polypeptide is WAT1-related protein At1g11460 (Arabidopsis thaliana (Mouse-ear cress)).